The sequence spans 421 residues: Putative nickel insertion protein (421 aa).

It belongs to the LarC family.

The protein is Putative nickel insertion protein of Gloeobacter violaceus (strain ATCC 29082 / PCC 7421).